The chain runs to 148 residues: MAPGLRGLPRCGLWLLLAHHLFMVTACRDPDYGTLIQELCLSRFKENMETIGKTLWCDWGKTIQSYGELTYCTKHVAHTIGCFWPNPEVDRFFIAVHHRYFSKCPISGRALRDPPNSILCPFIALPITVTLLMTALVVWRSKRTEGIV.

Positions 1–26 (MAPGLRGLPRCGLWLLLAHHLFMVTA) are cleaved as a signal peptide. Intrachain disulfides connect C27-C82, C40-C72, and C57-C104. Topologically, residues 27-118 (CRDPDYGTLI…RALRDPPNSI (92 aa)) are extracellular. Residues 119-140 (LCPFIALPITVTLLMTALVVWR) traverse the membrane as a helical segment. At 141–148 (SKRTEGIV) the chain is on the cytoplasmic side.

The protein belongs to the RAMP family. Heterodimer of CALCRL and RAMP1; the interaction induces allosteric modulation of CALCRL function and CGRP1/CALCA and CGRP2/CALCB ligand specificity. Heterodimer of CALCR and RAMP1; interaction forms the AMYR1 receptor complex for amylin/IAPP and CGRP1/CALCA ligands. In terms of tissue distribution, expressed predominantly in the thymus, skeletal muscle, embryonic and adult brain, embryonic and adult lung, and colon.

It is found in the cell membrane. Accessory protein that interacts with and modulates the function of G-protein coupled receptors including calcitonin gene-related peptide type 1 receptor (CALCRL) and calcitonin receptor (CALCR). Required for the transport of CALCRL to the plasma membrane. Together with CALCRL, form the receptor complex for the calcitonin gene-related peptides CGRP1/CALCA and CGRP2/CALCB. Together with CALCR, form the AMYR1 receptor complex for amylin/IAPP and CGRP1/CALCA. In Mus musculus (Mouse), this protein is Receptor activity-modifying protein 1.